The following is a 411-amino-acid chain: MMAEIICVGTELLLGQIVNTNAQYLSQRLASLGIDLYFQTTVGDNLNRLKGAIDIALKRSDILIFTGGLGPTSDDITKEAVCEYFGKKLILNQEVLDKIEKYFKHRGVKMPEINKKQAYVPEGSIILENRHGTAPGFIIENDGKIAILLPGPPFEMQPMFEEYVVPYLEKFSKEKIYSRVLKFIGIGESSIEERLSELIHNQSDPSLALYAKPFEVELRISTKKSDEAVAKDILDQMESKIRALLGEYIYGIDNQTLEEVVVEMLMQKGLKVSVAESCTGGLICNKITNVPGASNVFDRGFITYSNEAKVKELGVSEETLKNFGAVSHEVAKQMAQGALKTSLADIAISTTGIAGPTGATETKPVGLVYIGVATKNYVDSFEFRFSGDRLRIKEAASKAALDVLRKTIINY.

It belongs to the CinA family.

The sequence is that of Putative competence-damage inducible protein from Caldicellulosiruptor saccharolyticus (strain ATCC 43494 / DSM 8903 / Tp8T 6331).